The following is a 538-amino-acid chain: Eukaryotic translation initiation factor 3 subunit L (538 aa).

One can recognise a PCI domain in the interval 305–513 (TFSDILLYIQ…IHIADTKVSH (209 aa)).

The protein belongs to the eIF-3 subunit L family. In terms of assembly, component of the eukaryotic translation initiation factor 3 (eIF-3) complex. The eIF-3 complex interacts with pix.

It localises to the cytoplasm. Component of the eukaryotic translation initiation factor 3 (eIF-3) complex, which is involved in protein synthesis of a specialized repertoire of mRNAs and, together with other initiation factors, stimulates binding of mRNA and methionyl-tRNAi to the 40S ribosome. The eIF-3 complex specifically targets and initiates translation of a subset of mRNAs involved in cell proliferation. The polypeptide is Eukaryotic translation initiation factor 3 subunit L (Drosophila virilis (Fruit fly)).